The chain runs to 478 residues: Putative UDP-glucose flavonoid 3-O-glucosyltransferase 3 (478 aa).

It belongs to the UDP-glycosyltransferase family.

This chain is Putative UDP-glucose flavonoid 3-O-glucosyltransferase 3, found in Fragaria ananassa (Strawberry).